The primary structure comprises 251 residues: DNA-directed RNA polymerase III subunit RPC7 (251 aa).

Residues 186–251 (DDASTGDGAA…EEDPNEEAAF (66 aa)) form a disordered region. Serine 189 bears the Phosphoserine mark. Acidic residues-rich tracts occupy residues 203-225 (GEDD…DDDY) and 234-251 (GDDD…EAAF).

This sequence belongs to the eukaryotic RPC7 RNA polymerase subunit family. Component of the RNA polymerase III (Pol III) complex consisting of 17 subunits.

Its subcellular location is the nucleus. In terms of biological role, DNA-dependent RNA polymerase catalyzes the transcription of DNA into RNA using the four ribonucleoside triphosphates as substrates. Specific peripheric component of RNA polymerase III which synthesizes small RNAs, such as 5S rRNA and tRNAs. C31 is involved in the formation of the initiation complex. The chain is DNA-directed RNA polymerase III subunit RPC7 (RPC31) from Saccharomyces cerevisiae (strain ATCC 204508 / S288c) (Baker's yeast).